The sequence spans 368 residues: Biglycan (368 aa).

Positions 1–16 (MKVLLLLCSCILVIHA) are cleaved as a signal peptide. Positions 17-37 (LPFEQRGFWDFSMDDGMAMMK) are excised as a propeptide. Cystine bridges form between cysteine 63-cysteine 69 and cysteine 67-cysteine 76. LRR repeat units follow at residues 82–102 (TSIPKNLPKDTTLLDLQNNKI), 103–126 (TEIKKDDFKGLTNLYALVIVNNKI), 127–150 (SKINEKAFEPLQKMQKLYISKNNL), 151–171 (EEIPKNLPKSLVELRIHENKI), 172–195 (KKVPKGVFSGLKNMNCIEMGGNPL), 196–220 (ENGGIEAGAFDGLKLNYLRVSEAKL), 221–241 (SGIPKGLPSTLNELHLDNNKI), 242–265 (QAIEKEDLSQYASLYRLGLGHNNI), 266–289 (RMIENGSLSFMPVLRELHLDNNKL), 290–312 (SKVPPGLPDMKLLQVVYLHSNNI), 313–342 (TQVGVNDFCPIGFGVKRAYYNGISLFNNPV), and 343–368 (PYWEVQPATFRCVTDRLAIQFGNYRK). N-linked (GlcNAc...) asparagine glycans are attached at residues asparagine 270 and asparagine 311. A disulfide bridge connects residues cysteine 321 and cysteine 354.

Belongs to the small leucine-rich proteoglycan (SLRP) family. SLRP class I subfamily.

Its subcellular location is the secreted. It is found in the extracellular space. The protein localises to the extracellular matrix. May be involved in collagen fiber assembly. This chain is Biglycan (bgn), found in Xenopus laevis (African clawed frog).